The chain runs to 99 residues: MLLEIITAYKIGTILFLIGILGFIINRQNILLLIISIEMTLLAISFIIICSALFLDDSAAACFSLYILALAGSEAAIGLSLLVLFHRFRGSVLISASRQ.

3 helical membrane passes run I5–I25, I30–C50, and L65–F85.

Belongs to the complex I subunit 4L family.

It localises to the mitochondrion membrane. The catalysed reaction is a ubiquinone + NADH + 5 H(+)(in) = a ubiquinol + NAD(+) + 4 H(+)(out). Core subunit of the mitochondrial membrane respiratory chain NADH dehydrogenase (Complex I) that is believed to belong to the minimal assembly required for catalysis. Complex I functions in the transfer of electrons from NADH to the respiratory chain. The immediate electron acceptor for the enzyme is believed to be ubiquinone. The polypeptide is NADH-ubiquinone oxidoreductase chain 4L (ND4L) (Allomyces macrogynus).